We begin with the raw amino-acid sequence, 104 residues long: Glutaredoxin (104 aa).

The region spanning 3–103 (MIKAQELVSS…PLLTEAGAVK (101 aa)) is the Glutaredoxin domain. A disulfide bridge links C23 with C26.

Belongs to the glutaredoxin family. CPYC subfamily.

The protein localises to the cytoplasm. Has a glutathione-disulfide oxidoreductase activity in the presence of NADPH and glutathione reductase. Reduces low molecular weight disulfides and proteins. In Vernicia fordii (Tung), this protein is Glutaredoxin.